The primary structure comprises 333 residues: Phosphate acyltransferase (333 aa).

This sequence belongs to the PlsX family. As to quaternary structure, homodimer. Probably interacts with PlsY.

The protein resides in the cytoplasm. The enzyme catalyses a fatty acyl-[ACP] + phosphate = an acyl phosphate + holo-[ACP]. Its pathway is lipid metabolism; phospholipid metabolism. Functionally, catalyzes the reversible formation of acyl-phosphate (acyl-PO(4)) from acyl-[acyl-carrier-protein] (acyl-ACP). This enzyme utilizes acyl-ACP as fatty acyl donor, but not acyl-CoA. The sequence is that of Phosphate acyltransferase from Clostridium beijerinckii (strain ATCC 51743 / NCIMB 8052) (Clostridium acetobutylicum).